The following is a 504-amino-acid chain: ADP,ATP carrier protein 3 (504 aa).

12 helical membrane passes run L23 to L43, I59 to Y79, Y90 to I110, Y146 to W166, P183 to F203, E230 to F250, I296 to A316, V329 to I349, L364 to I384, E386 to I406, F449 to T469, and I473 to V493.

This sequence belongs to the ADP/ATP translocase tlc family.

It localises to the cell membrane. In terms of biological role, provides the rickettsial cell with host ATP in exchange for rickettsial ADP. This is an obligate exchange system. This energy acquiring activity is an important component of rickettsial parasitism. This chain is ADP,ATP carrier protein 3 (tlcC), found in Rickettsia bellii (strain RML369-C).